We begin with the raw amino-acid sequence, 127 residues long: Peroxiredoxin-2 (127 aa).

A Thioredoxin domain is found at 1 to 125 (LFFYPLDFTF…ALRLVQGXQY (125 aa)). Cys12 serves as the catalytic Cysteine sulfenic acid (-SOH) intermediate. Position 73 is a phosphoserine (Ser73).

This sequence belongs to the peroxiredoxin family. AhpC/Prx1 subfamily. Homodimer; disulfide-linked, upon oxidation. 5 homodimers assemble to form a ring-like decamer. Interacts with TIPIN. In terms of processing, the enzyme can be inactivated by further oxidation of the cysteine sulfenic acid (C(P)-SOH) to sulphinic acid (C(P)-SO2H) instead of its condensation to a disulfide bond. It can be reactivated by forming a transient disulfide bond with sulfiredoxin SRXN1, which reduces the cysteine sulfinic acid in an ATP- and Mg-dependent manner. Post-translationally, acetylation increases resistance to transition to high molecular-mass complexes. Deacetylated by HDAC6 which decreases reducing activity.

Its subcellular location is the cytoplasm. The enzyme catalyses a hydroperoxide + [thioredoxin]-dithiol = an alcohol + [thioredoxin]-disulfide + H2O. Thiol-specific peroxidase that catalyzes the reduction of hydrogen peroxide and organic hydroperoxides to water and alcohols, respectively. Plays a role in cell protection against oxidative stress by detoxifying peroxides and as sensor of hydrogen peroxide-mediated signaling events. Might participate in the signaling cascades of growth factors and tumor necrosis factor-alpha by regulating the intracellular concentrations of H(2)O(2). The chain is Peroxiredoxin-2 (PRDX2) from Sus scrofa (Pig).